We begin with the raw amino-acid sequence, 880 residues long: Probable LRR receptor-like serine/threonine-protein kinase At2g28960 (880 aa).

Positions 1-24 (MEGRRQRLLVFIFGALAITHLVQA) are cleaved as a signal peptide. The Extracellular portion of the chain corresponds to 25–511 (QPPDQRGFIS…NNNNQTYIVP (487 aa)). Residues Asn-180, Asn-201, Asn-228, Asn-254, Asn-287, Asn-403, Asn-430, and Asn-441 are each glycosylated (N-linked (GlcNAc...) asparagine). LRR repeat units lie at residues 409–430 (RIIS…AFQN), 433–455 (ELRK…LASM), and 457–476 (SLSI…PKLL). The N-linked (GlcNAc...) asparagine glycan is linked to Asn-505. A helical membrane pass occupies residues 512-532 (VVASVASVLIIIAVLILILVF). The Cytoplasmic portion of the chain corresponds to 533-880 (KKRRPTQVDS…FTTEINPKAR (348 aa)). Thr-564 is modified (phosphothreonine). Residues 573-846 (DNFERVLGEG…QVTNELKQCL (274 aa)) enclose the Protein kinase domain. ATP-binding positions include 579–587 (LGEGGFGVV) and Lys-601. The residue at position 646 (Tyr-646) is a Phosphotyrosine. Residue Asp-698 is the Proton acceptor of the active site. Ser-732 is modified (phosphoserine). Phosphothreonine is present on residues Thr-733 and Thr-738. The residue at position 746 (Tyr-746) is a Phosphotyrosine. The disordered stretch occupies residues 854–880 (GVREDMGSRSSVEMSTSFTTEINPKAR). Over residues 861–880 (SRSSVEMSTSFTTEINPKAR) the composition is skewed to polar residues.

This sequence belongs to the protein kinase superfamily. Ser/Thr protein kinase family.

It is found in the membrane. The enzyme catalyses L-seryl-[protein] + ATP = O-phospho-L-seryl-[protein] + ADP + H(+). It catalyses the reaction L-threonyl-[protein] + ATP = O-phospho-L-threonyl-[protein] + ADP + H(+). In Arabidopsis thaliana (Mouse-ear cress), this protein is Probable LRR receptor-like serine/threonine-protein kinase At2g28960.